Here is a 61-residue protein sequence, read N- to C-terminus: Small ribosomal subunit protein uS14 (61 aa).

Positions 24, 27, 40, and 43 each coordinate Zn(2+).

It belongs to the universal ribosomal protein uS14 family. Zinc-binding uS14 subfamily. In terms of assembly, part of the 30S ribosomal subunit. Contacts proteins S3 and S10. Requires Zn(2+) as cofactor.

Its function is as follows. Binds 16S rRNA, required for the assembly of 30S particles and may also be responsible for determining the conformation of the 16S rRNA at the A site. This chain is Small ribosomal subunit protein uS14, found in Mycoplasmopsis agalactiae (strain NCTC 10123 / CIP 59.7 / PG2) (Mycoplasma agalactiae).